Here is a 599-residue protein sequence, read N- to C-terminus: Elongation factor 4 (599 aa).

One can recognise a tr-type G domain in the interval 2-184; sequence NYKRNFSIIA…RLVRDIPAPK (183 aa). Residues 14–19 and 131–134 contribute to the GTP site; these read DHGKST and NKID.

It belongs to the TRAFAC class translation factor GTPase superfamily. Classic translation factor GTPase family. LepA subfamily.

It is found in the cell membrane. It catalyses the reaction GTP + H2O = GDP + phosphate + H(+). In terms of biological role, required for accurate and efficient protein synthesis under certain stress conditions. May act as a fidelity factor of the translation reaction, by catalyzing a one-codon backward translocation of tRNAs on improperly translocated ribosomes. Back-translocation proceeds from a post-translocation (POST) complex to a pre-translocation (PRE) complex, thus giving elongation factor G a second chance to translocate the tRNAs correctly. Binds to ribosomes in a GTP-dependent manner. The sequence is that of Elongation factor 4 from Hamiltonella defensa subsp. Acyrthosiphon pisum (strain 5AT).